A 120-amino-acid chain; its full sequence is MAVPKSKQPRKQRRWLYKTAKLHERHKLLHATLSKDLRKKYGKRAIRVRKGDKVRIMRGQFAGHEGRVLEVDMKRCRITVDGVTVTKADGTEVAVPIHPSNVMITDFGEVDEVRKKILER.

The protein belongs to the universal ribosomal protein uL24 family. Part of the 50S ribosomal subunit.

Its function is as follows. One of two assembly initiator proteins, it binds directly to the 5'-end of the 23S rRNA, where it nucleates assembly of the 50S subunit. Located at the polypeptide exit tunnel on the outside of the subunit. The sequence is that of Large ribosomal subunit protein uL24 from Archaeoglobus fulgidus (strain ATCC 49558 / DSM 4304 / JCM 9628 / NBRC 100126 / VC-16).